The following is a 2357-amino-acid chain: Protein transport protein Sec16A (2357 aa).

Disordered regions lie at residues 1–225 (MQPP…SYQH), 240–347 (QAAS…AHHP), 394–463 (SFSS…GTGT), 504–562 (YGPL…ARPQ), 579–630 (DTSG…TSAN), 666–689 (KRRA…DNME), 714–739 (TAGT…GPVK), 778–820 (SEVV…PPKV), 917–1008 (VTGA…QEEA), 1023–1055 (PVRM…LHNQ), and 1076–1151 (QPEL…AAVR). Composition is skewed to polar residues over residues 57 to 75 (NRQT…SSLP) and 94 to 104 (TPTNAGDSSTG). Positions 208-221 (MPGQWGPAQGGPQP) are enriched in low complexity. Residues 281 to 290 (VHQQSKNHPL) are compositionally biased toward polar residues. Ser311 is subject to Phosphoserine. Over residues 333-342 (PFTQGNSPEN) the composition is skewed to polar residues. A compositionally biased stretch (low complexity) spans 540-561 (PDSVSSSYSSHSHRSPPGSARP). Residues Ser581, Ser591, Ser609, Ser611, and Ser614 each carry the phosphoserine modification. Positions 581–590 (SGSFFKQIDS) are enriched in polar residues. Thr615 is subject to Phosphothreonine. Ser617 carries the phosphoserine modification. Composition is skewed to polar residues over residues 921–959 (SLPS…QTPQ), 972–997 (FVSS…PNSN), and 1029–1041 (PSPS…QQPL). Residues 1037-1905 (SQQPLPNHPR…QHVERQIQEG (869 aa)) are required for localization to endoplasmic reticulum exit sites. At Ser1087 the chain carries Phosphoserine. The interaction with MIA3 stretch occupies residues 1118–1415 (ASPASVNTGQ…EAPHAPGSFH (298 aa)). The segment at 1119–1420 (SPASVNTGQL…PGSFHGDYAY (302 aa)) is required for endoplasmic reticulum localization. The segment covering 1134–1150 (QASSASVTSTNSSQAAV) has biased composition (low complexity). Residue Ser1223 is modified to Phosphoserine. A disordered region spans residues 1226 to 1253 (AENHRYSEPERPSSRASHYSDQLAPRQG). The span at 1227–1238 (ENHRYSEPERPS) shows a compositional bias: basic and acidic residues. Ser1245 bears the Phosphoserine mark. Thr1340 bears the Phosphothreonine mark. Ser1342, Ser1362, Ser1365, Ser1371, Ser1374, Ser1377, Ser1384, Ser1588, and Ser1616 each carry phosphoserine. Residues 1344–1395 (DDDAEIHRDPYGEEADRRSIHSEHSARSLRSTHSLPSRRSSLSSHSHQSQIY) are disordered. A compositionally biased stretch (basic and acidic residues) spans 1348 to 1369 (EIHRDPYGEEADRRSIHSEHSA). The segment covering 1371 to 1392 (SLRSTHSLPSRRSSLSSHSHQS) has biased composition (low complexity). Residues 1449-1905 (QVPSRPTSPE…QHVERQIQEG (457 aa)) form a central conserved domain (CCD); mediates interaction with RNF183, LRRK2 and SEC13 region. Residues 1907–1943 (VLWSQDGTEPQQCRITSGSEVEQSDGPGLNQQAGPQA) are disordered. The span at 1908 to 1927 (LWSQDGTEPQQCRITSGSEV) shows a compositional bias: polar residues. Thr1922 bears the Phosphothreonine mark. Residues Ser1951, Ser2043, Ser2063, Ser2077, and Ser2094 each carry the phosphoserine modification. Disordered stretches follow at residues 1993-2141 (ELSP…RTEA), 2156-2198 (KKNQ…PTAS), and 2240-2357 (PLPI…AALN). A compositionally biased stretch (polar residues) spans 2092–2105 (GSSSLTRAPSLTSD). The segment covering 2106–2126 (SEGKKPAQAVKKEPKEPKKTE) has biased composition (basic and acidic residues). The required for interaction with SEC23A stretch occupies residues 2126–2357 (ESWFSRWLPG…IGQRKYAALN (232 aa)). Ser2291 bears the Phosphoserine mark. Over residues 2332–2343 (QLVQASVTSGNS) the composition is skewed to polar residues.

Belongs to the SEC16 family. As to quaternary structure, SEC16A and SEC16B are each present in multiple copies in a heteromeric complex. Interacts with SEC23A. Interacts with RNF183, RNF152, MIA3 and SEC13. Interacts with GORASP2 in response to ER stress. Interacts with LRRK2 (via ROC domain). Interacts with RAB10.

The protein resides in the endoplasmic reticulum membrane. Its subcellular location is the golgi apparatus membrane. It is found in the cytoplasm. The protein localises to the perinuclear region. It localises to the cytosol. The protein resides in the microsome membrane. Functionally, acts as a molecular scaffold that plays a key role in the organization of the endoplasmic reticulum exit sites (ERES), also known as transitional endoplasmic reticulum (tER). SAR1A-GTP-dependent assembly of SEC16A on the ER membrane forms an organized scaffold defining an ERES. Required for secretory cargo traffic from the endoplasmic reticulum to the Golgi apparatus. Mediates the recruitment of MIA3/TANGO to ERES. Regulates both conventional (ER/Golgi-dependent) and GORASP2-mediated unconventional (ER/Golgi-independent) trafficking of CFTR to cell membrane. Acts as a RAB10 effector in the regulation of insulin-induced SLC2A4/GLUT4 glucose transporter-enriched vesicles delivery to the plasma membrane in adipocytes. The protein is Protein transport protein Sec16A (Sec16a) of Mus musculus (Mouse).